A 62-amino-acid polypeptide reads, in one-letter code: KappaPI-actitoxin-Avd3a (62 aa).

The BPTI/Kunitz inhibitor domain occupies 5–55 (CELPKVVGPCRARFPRYYYNSSSKRCEKFIYGGCGGNANNFHTLEECEKVC). Cystine bridges form between cysteine 5-cysteine 55, cysteine 14-cysteine 38, and cysteine 30-cysteine 51.

It belongs to the venom Kunitz-type family. Sea anemone type 2 potassium channel toxin subfamily.

It is found in the secreted. The protein localises to the nematocyst. In terms of biological role, serine protease inhibitor that inhibits both tissue and plasma kallikreins. Has hemolytic activity. Inhibits voltage-gated potassium channels. The protein is KappaPI-actitoxin-Avd3a of Anemonia sulcata (Mediterranean snakelocks sea anemone).